The chain runs to 473 residues: Glutamate--tRNA ligase 1 (473 aa).

The short motif at 23–33 (PSPTGLLHVGG) is the 'HIGH' region element. A 'KMSKS' region motif is present at residues 252–256 (KLSKR). Position 255 (Lys255) interacts with ATP.

It belongs to the class-I aminoacyl-tRNA synthetase family. Glutamate--tRNA ligase type 1 subfamily. As to quaternary structure, monomer.

It localises to the cytoplasm. The enzyme catalyses tRNA(Glu) + L-glutamate + ATP = L-glutamyl-tRNA(Glu) + AMP + diphosphate. Catalyzes the attachment of glutamate to tRNA(Glu) in a two-step reaction: glutamate is first activated by ATP to form Glu-AMP and then transferred to the acceptor end of tRNA(Glu). This Granulibacter bethesdensis (strain ATCC BAA-1260 / CGDNIH1) protein is Glutamate--tRNA ligase 1.